Reading from the N-terminus, the 214-residue chain is MIRVLVVDDHDLVRTGITRMLADIDGLQVVGQADSGEESLKKARELKPDVVLMDVKMPGIGGLEATRKLLRSHPDIKVVAVTVCEEDPFPTRLLQAGAAGYMTKGAGLAEMVQAIRLVFAGQRYISPQIAQQLALKSFQPQVNNSPFDLLSEREIQIALMIVGCQKVQTISDKLCLSPKTVNTYRYRIFEKLSISSDVELALLAVRHGMVDASA.

In terms of domain architecture, Response regulatory spans 3–119; the sequence is RVLVVDDHDL…EMVQAIRLVF (117 aa). D54 bears the 4-aspartylphosphate mark. Residues 143 to 208 form the HTH luxR-type domain; sequence NNSPFDLLSE…ELALLAVRHG (66 aa). Positions 167 to 186 form a DNA-binding region, H-T-H motif; the sequence is VQTISDKLCLSPKTVNTYRY.

In terms of biological role, required for production of extracellular enzymes and fluorescent siderophores. The chain is Response regulator GacA (gacA) from Pseudomonas viridiflava (Phytomonas viridiflava).